A 1235-amino-acid polypeptide reads, in one-letter code: Topoisomerase 1-associated factor 1 (1235 aa).

Disordered regions lie at residues 327 to 357 (RERK…GPPV), 584 to 610 (GEEA…HAER), 812 to 841 (EGAA…TEAR), and 897 to 1235 (EFSP…SDEE). The span at 585–603 (EEAEDVGVPEDNDADDSGD) shows a compositional bias: acidic residues. The span at 929 to 947 (DDDEEEIRGFLGDDDDEDF) shows a compositional bias: acidic residues. The segment covering 964–973 (QKKRQRKRRR) has biased composition (basic residues). Positions 977–986 (SGDEEDEGVS) are enriched in acidic residues. Over residues 999-1044 (EKELEKIRKIKSEMYVHASDDETDDERDREFFERERKRQETKDSKF) the composition is skewed to basic and acidic residues. 2 stretches are compositionally biased toward acidic residues: residues 1070-1081 (VLDDEPESDESE) and 1099-1118 (SEEE…SDEE). A compositionally biased stretch (basic residues) spans 1124–1150 (AKSKTSKRKAAVPSKRPARRPGTAKKR). Residues 1156–1170 (SDNDEDEDEEEDAMD) show a composition bias toward acidic residues. The span at 1193–1202 (LGRRIDKMAM) shows a compositional bias: basic and acidic residues. Acidic residues predominate over residues 1203-1212 (DDGDEDEDDQ).

The protein belongs to the timeless family. As to quaternary structure, component of the fork protection complex (FPC) consisting of tof-1 and csm-3.

It localises to the nucleus. In terms of biological role, forms a fork protection complex (FPC) with csm-3 and which is required for chromosome segregation during meiosis and DNA damage repair. FPC coordinates leading and lagging strand synthesis and moves with the replication fork. FPC stabilizes replication forks in a configuration that is recognized by replication checkpoint sensors. In Neurospora crassa (strain ATCC 24698 / 74-OR23-1A / CBS 708.71 / DSM 1257 / FGSC 987), this protein is Topoisomerase 1-associated factor 1 (tof-1).